The sequence spans 158 residues: NAD(P)H-quinone oxidoreductase subunit J, chloroplastic (158 aa).

The protein belongs to the complex I 30 kDa subunit family. NDH is composed of at least 16 different subunits, 5 of which are encoded in the nucleus.

The protein localises to the plastid. The protein resides in the chloroplast thylakoid membrane. It catalyses the reaction a plastoquinone + NADH + (n+1) H(+)(in) = a plastoquinol + NAD(+) + n H(+)(out). The catalysed reaction is a plastoquinone + NADPH + (n+1) H(+)(in) = a plastoquinol + NADP(+) + n H(+)(out). NDH shuttles electrons from NAD(P)H:plastoquinone, via FMN and iron-sulfur (Fe-S) centers, to quinones in the photosynthetic chain and possibly in a chloroplast respiratory chain. The immediate electron acceptor for the enzyme in this species is believed to be plastoquinone. Couples the redox reaction to proton translocation, and thus conserves the redox energy in a proton gradient. This is NAD(P)H-quinone oxidoreductase subunit J, chloroplastic from Nicotiana tabacum (Common tobacco).